A 78-amino-acid chain; its full sequence is Large ribosomal subunit protein bL31 (78 aa).

Residues Cys16, Cys18, Cys38, and Cys41 each coordinate Zn(2+).

Belongs to the bacterial ribosomal protein bL31 family. Type A subfamily. As to quaternary structure, part of the 50S ribosomal subunit. It depends on Zn(2+) as a cofactor.

Functionally, binds the 23S rRNA. The protein is Large ribosomal subunit protein bL31 of Frankia casuarinae (strain DSM 45818 / CECT 9043 / HFP020203 / CcI3).